The sequence spans 331 residues: E3 ubiquitin-protein ligase Siah2 (331 aa).

A disordered region spans residues 1-26 (MSRPSSAGGAAGGLGAGKAGGSKHGG). The segment covering 9–26 (GAAGGLGAGKAGGSKHGG) has biased composition (gly residues). The RING-type zinc-finger motif lies at 89-124 (CPVCFDYVLPPILQCQAGHLVCNQCRQKLSCCPTCR). The tract at residues 139-331 (VASTLPFPCK…LGINVTISMC (193 aa)) is SBD. The segment at 142–202 (TLPFPCKYSS…VMPHLMHAHK (61 aa)) adopts an SIAH-type zinc-finger fold. Cys-147, Cys-154, His-166, Cys-170, Cys-177, Cys-184, His-196, and His-201 together coordinate Zn(2+).

Belongs to the SINA (Seven in absentia) family. Homodimer. In terms of tissue distribution, in embryos it is expressed in all blastomeres starting at the mid-blastulla. After 20 somite stage, it is expressed mainly in the posterior part. Expressed in brain, including the eye, the cranial cavity, otic vesicle, optic chiasm and in the gut.

It carries out the reaction S-ubiquitinyl-[E2 ubiquitin-conjugating enzyme]-L-cysteine + [acceptor protein]-L-lysine = [E2 ubiquitin-conjugating enzyme]-L-cysteine + N(6)-ubiquitinyl-[acceptor protein]-L-lysine.. It participates in protein modification; protein ubiquitination. Functionally, E3 ubiquitin-protein ligase that mediates ubiquitination and subsequent proteasomal degradation of target proteins. E3 ubiquitin ligases accept ubiquitin from an E2 ubiquitin-conjugating enzyme in the form of a thioester and then directly transfers the ubiquitin to targeted substrates. It probably triggers the ubiquitin-mediated degradation of different substrates. Induces cellular growth arrest by inhibiting the G2/M transition. May play a role in the regulation of the cellular clock function. This chain is E3 ubiquitin-protein ligase Siah2 (siah2l), found in Danio rerio (Zebrafish).